The sequence spans 581 residues: Proline--tRNA ligase (581 aa).

Belongs to the class-II aminoacyl-tRNA synthetase family. ProS type 1 subfamily. As to quaternary structure, homodimer.

It localises to the cytoplasm. It carries out the reaction tRNA(Pro) + L-proline + ATP = L-prolyl-tRNA(Pro) + AMP + diphosphate. Catalyzes the attachment of proline to tRNA(Pro) in a two-step reaction: proline is first activated by ATP to form Pro-AMP and then transferred to the acceptor end of tRNA(Pro). As ProRS can inadvertently accommodate and process non-cognate amino acids such as alanine and cysteine, to avoid such errors it has two additional distinct editing activities against alanine. One activity is designated as 'pretransfer' editing and involves the tRNA(Pro)-independent hydrolysis of activated Ala-AMP. The other activity is designated 'posttransfer' editing and involves deacylation of mischarged Ala-tRNA(Pro). The misacylated Cys-tRNA(Pro) is not edited by ProRS. The polypeptide is Proline--tRNA ligase (Azoarcus sp. (strain BH72)).